We begin with the raw amino-acid sequence, 197 residues long: Probable 26S proteasome non-ATPase regulatory subunit 9 (197 aa).

The 92-residue stretch at 75–166 (KIVVEMENEN…KIIRVTVIRE (92 aa)) folds into the PDZ domain.

The protein belongs to the proteasome subunit p27 family.

In terms of biological role, acts as a chaperone during the assembly of the 26S proteasome, specifically of the base subcomplex of the 19S regulatory complex (RC). This chain is Probable 26S proteasome non-ATPase regulatory subunit 9 (psmd-9), found in Caenorhabditis elegans.